Reading from the N-terminus, the 305-residue chain is Tyrosine recombinase XerC (305 aa).

Positions 4-95 (TQIQELIIKW…AIKNFYKFLE (92 aa)) constitute a Core-binding (CB) domain. The region spanning 116-298 (LLPKALSEEE…SIKHLETAYV (183 aa)) is the Tyr recombinase domain. Catalysis depends on residues Arg-159, Lys-182, His-250, Arg-253, and His-276. Catalysis depends on Tyr-285, which acts as the O-(3'-phospho-DNA)-tyrosine intermediate.

It belongs to the 'phage' integrase family. XerC subfamily. In terms of assembly, forms a cyclic heterotetrameric complex composed of two molecules of XerC and two molecules of XerD.

The protein resides in the cytoplasm. Its function is as follows. Site-specific tyrosine recombinase, which acts by catalyzing the cutting and rejoining of the recombining DNA molecules. The XerC-XerD complex is essential to convert dimers of the bacterial chromosome into monomers to permit their segregation at cell division. It also contributes to the segregational stability of plasmids. In Rickettsia bellii (strain RML369-C), this protein is Tyrosine recombinase XerC.